A 459-amino-acid polypeptide reads, in one-letter code: Transcription factor mlcR (459 aa).

Positions 21-53 (CDRCHAQKLKCTGSNANLVRAQCQRCQQAGLRC) form a DNA-binding region, zn(2)-C6 fungal-type. Disordered regions lie at residues 64-84 (LHKE…PMTA) and 135-170 (DPES…DFEG). Residues 69–78 (AAGTTRATET) are compositionally biased toward low complexity.

The protein localises to the nucleus. Functionally, transcription factor that regulates the gene cluster that mediates the biosynthesis of compactin, also known as mevastatin or ML-236B, and which acts as a potent competitive inhibitor of HMG-CoA reductase. Binds to the consensus-binding motif 5'-WCGG-N(6)-TCGG-3' of target genes. The polypeptide is Transcription factor mlcR (Penicillium citrinum).